The following is a 352-amino-acid chain: Maleylacetate reductase (352 aa).

The protein belongs to the iron-containing alcohol dehydrogenase family.

It carries out the reaction 3-oxoadipate + NAD(+) = maleylacetate + NADH + H(+). The enzyme catalyses 3-oxoadipate + NADP(+) = maleylacetate + NADPH + H(+). It participates in aromatic compound metabolism; 3-chlorocatechol degradation. This is Maleylacetate reductase (tcbF) from Pseudomonas sp. (strain P51).